Consider the following 394-residue polypeptide: Subtilisin-like protease CPC735_005570 (394 aa).

The signal sequence occupies residues 1-21; that stretch reads MRAIISVALFLSLSLLSAVNA. A propeptide spanning residues 22-114 is cleaved from the precursor; sequence AEILSAGDTD…IEHDRIANAR (93 aa). One can recognise an Inhibitor I9 domain in the interval 37-110; that stretch reads SYIVVMRDGL…AVKYIEHDRI (74 aa). The Peptidase S8 domain maps to 123–394; the sequence is GWNLARISHK…RLLLYNGSGR (272 aa). Active-site charge relay system residues include aspartate 155 and histidine 186. Asparagine 216 and asparagine 247 each carry an N-linked (GlcNAc...) asparagine glycan. Serine 340 (charge relay system) is an active-site residue. N-linked (GlcNAc...) asparagine glycans are attached at residues asparagine 382 and asparagine 390.

It belongs to the peptidase S8 family.

Its subcellular location is the secreted. Functionally, secreted subtilisin-like serine protease with keratinolytic activity that contributes to pathogenicity. The sequence is that of Subtilisin-like protease CPC735_005570 from Coccidioides posadasii (strain C735) (Valley fever fungus).